Here is a 209-residue protein sequence, read N- to C-terminus: MTLASQIATQLLDIKAIYLKPEDPFTWASGIKSPIYTDNRVTLSYPKTRDLIENGFVETIRAHFPEVEVIAGTATAGIPHGAIIADKMTLPFAYIRSKPKDHGAGNQIEGRVLKGQKMVIIEDLISTGGSVLDAAAAASREGADVLGVVAIFTYELPKASQNFKEAGIKLITLSNYTELIAVAKLQGYITNDGLHLLKKFKEDQVNWQQ.

5-phospho-alpha-D-ribose 1-diphosphate-binding positions include arginine 96, lysine 100, histidine 102, and 122–130; that span reads EDLISTGGS. Serine 126 lines the orotate pocket.

Belongs to the purine/pyrimidine phosphoribosyltransferase family. PyrE subfamily. As to quaternary structure, homodimer. It depends on Mg(2+) as a cofactor.

It carries out the reaction orotidine 5'-phosphate + diphosphate = orotate + 5-phospho-alpha-D-ribose 1-diphosphate. The protein operates within pyrimidine metabolism; UMP biosynthesis via de novo pathway; UMP from orotate: step 1/2. In terms of biological role, catalyzes the transfer of a ribosyl phosphate group from 5-phosphoribose 1-diphosphate to orotate, leading to the formation of orotidine monophosphate (OMP). The polypeptide is Orotate phosphoribosyltransferase (Streptococcus pyogenes serotype M2 (strain MGAS10270)).